Consider the following 159-residue polypeptide: Mitotic-spindle organizing protein 2 (159 aa).

The segment at 87-159 is disordered; sequence LASDPQDSVP…SGKSNSRSSP (73 aa). The span at 91–105 shows a compositional bias: polar residues; the sequence is PQDSVPISLSTSTSE. R111 carries the omega-N-methylarginine modification. Residue S153 is modified to Phosphoserine.

The protein belongs to the MOZART2 family. In terms of assembly, associates with the gamma-tubulin ring complex (gTuRC) consisting of TUBGCP2, TUBGCP3, TUBGCP4, TUBGCP5 and TUBGCP6 and gamma-tubulin TUBG1 or TUBG2; within the complex, interacts with TUBGCP2; the interaction plays a role in gTuRC activation.

It localises to the cytoplasm. Its subcellular location is the cytoskeleton. The protein resides in the microtubule organizing center. The protein localises to the centrosome. It is found in the spindle. Required for the recruitment and the assembly of the gamma-tubulin ring complex (gTuRC) at the centrosome. The gTuRC regulates the minus-end nucleation of alpha-beta tubulin heterodimers that grow into microtubule protafilaments, a critical step in centrosome duplication and spindle formation. The chain is Mitotic-spindle organizing protein 2 (Mzt2) from Mus musculus (Mouse).